We begin with the raw amino-acid sequence, 199 residues long: dITP/XTP pyrophosphatase (199 aa).

A substrate-binding site is contributed by 8 to 13 (TRNKGK). Mg(2+) contacts are provided by E41 and D70. D70 serves as the catalytic Proton acceptor. Substrate contacts are provided by residues S71, 153–156 (FGYD), K176, and 181–182 (HR).

It belongs to the HAM1 NTPase family. In terms of assembly, homodimer. The cofactor is Mg(2+).

The enzyme catalyses XTP + H2O = XMP + diphosphate + H(+). The catalysed reaction is dITP + H2O = dIMP + diphosphate + H(+). It catalyses the reaction ITP + H2O = IMP + diphosphate + H(+). Pyrophosphatase that catalyzes the hydrolysis of nucleoside triphosphates to their monophosphate derivatives, with a high preference for the non-canonical purine nucleotides XTP (xanthosine triphosphate), dITP (deoxyinosine triphosphate) and ITP. Seems to function as a house-cleaning enzyme that removes non-canonical purine nucleotides from the nucleotide pool, thus preventing their incorporation into DNA/RNA and avoiding chromosomal lesions. This chain is dITP/XTP pyrophosphatase, found in Geobacter sulfurreducens (strain ATCC 51573 / DSM 12127 / PCA).